Here is a 189-residue protein sequence, read N- to C-terminus: MTEYKLVVVGAGGVGKSALTIQLIQNHFVDEYDPTIEDSYRKQVVIDGETCLLDILDTAGQEEYSAMRDQYMRTGEGFLCVFAINNSKSFADINLYREQIKRVKDSDDVPMVLVGNKCDLPTRTVDTKQAHELAKSYGIPFIETSAKTRQGVEDAFYTLVREIRQYRLKKLNSSDDGTQGCMGSPCVLM.

GTP is bound by residues 10–18 (GAGGVGKSA) and 29–30 (VD). Positions 32-40 (YDPTIEDSY) match the Effector region motif. 57-61 (DTAGQ) lines the GTP pocket. Ser89 is subject to Phosphoserine. 116 to 119 (NKCD) contacts GTP. The tract at residues 166–185 (YRLKKLNSSDDGTQGCMGSP) is hypervariable region. Lys170 participates in a covalent cross-link: Glycyl lysine isopeptide (Lys-Gly) (interchain with G-Cter in ubiquitin). The S-palmitoyl cysteine moiety is linked to residue Cys181. Residue Cys186 is the site of S-farnesyl cysteine attachment. Residues 187–189 (VLM) constitute a propeptide, removed in mature form.

This sequence belongs to the small GTPase superfamily. Ras family. In terms of assembly, interacts (active GTP-bound form preferentially) with RGS14. Interacts (active GTP-bound form) with RASSF7. Interacts (active GTP-bound form) with both SHOC2 and PP1c (all isoforms) to form a tertiary complex; SHOC2 and PP1c preferably bind M-Ras/MRAS, but they also bind K-Ras/KRAS, N-Ras/NRAS and H-Ras/HRAS. In terms of processing, palmitoylated by the ZDHHC9-GOLGA7 complex. Depalmitoylated by ABHD17A, ABHD17B and ABHD17C. A continuous cycle of de- and re-palmitoylation regulates rapid exchange between plasma membrane and Golgi. Acetylation at Lys-104 prevents interaction with guanine nucleotide exchange factors (GEFs). Post-translationally, ubiquitinated by the BCR(LZTR1) E3 ubiquitin ligase complex at Lys-170 in a non-degradative manner, leading to inhibit Ras signaling by decreasing Ras association with membranes. In terms of processing, phosphorylation at Ser-89 enhances NRAS association with its downstream effectors.

It localises to the cell membrane. It is found in the golgi apparatus membrane. The enzyme catalyses GTP + H2O = GDP + phosphate + H(+). Alternates between an inactive form bound to GDP and an active form bound to GTP. Activated by a guanine nucleotide-exchange factor (GEF) and inactivated by a GTPase-activating protein (GAP). Its function is as follows. Ras proteins bind GDP/GTP and possess intrinsic GTPase activity. The polypeptide is GTPase NRas (Nras) (Mus musculus (Mouse)).